A 356-amino-acid chain; its full sequence is Riboflavin biosynthesis protein RibD (356 aa).

The deaminase stretch occupies residues 1-148; that stretch reads MIREIDKNYM…EDFFTYITQE (148 aa). The region spanning 4 to 126 is the CMP/dCMP-type deaminase domain; that stretch reads EIDKNYMKLA…KLRNAGIEVD (123 aa). Position 53 (histidine 53) interacts with Zn(2+). Residue glutamate 55 is the Proton donor of the active site. Residues cysteine 78 and cysteine 87 each contribute to the Zn(2+) site. The tract at residues 149–356 is reductase; that stretch reads RPYITLKWAQ…EDLVIFFKRY (208 aa). Alanine 157 contributes to the NADP(+) binding site. Residue serine 171 participates in substrate binding. An NADP(+)-binding site is contributed by tryptophan 173. Residue arginine 187 coordinates substrate. 2 residues coordinate NADP(+): threonine 199 and aspartate 203. 3 residues coordinate substrate: leucine 207, arginine 210, and glutamate 290. Position 292-298 (292-298) interacts with NADP(+); sequence GPRTLTS.

It in the N-terminal section; belongs to the cytidine and deoxycytidylate deaminase family. The protein in the C-terminal section; belongs to the HTP reductase family. The cofactor is Zn(2+).

The enzyme catalyses 2,5-diamino-6-hydroxy-4-(5-phosphoribosylamino)-pyrimidine + H2O + H(+) = 5-amino-6-(5-phospho-D-ribosylamino)uracil + NH4(+). It catalyses the reaction 5-amino-6-(5-phospho-D-ribitylamino)uracil + NADP(+) = 5-amino-6-(5-phospho-D-ribosylamino)uracil + NADPH + H(+). The protein operates within cofactor biosynthesis; riboflavin biosynthesis; 5-amino-6-(D-ribitylamino)uracil from GTP: step 2/4. It participates in cofactor biosynthesis; riboflavin biosynthesis; 5-amino-6-(D-ribitylamino)uracil from GTP: step 3/4. Its function is as follows. Converts 2,5-diamino-6-(ribosylamino)-4(3h)-pyrimidinone 5'-phosphate into 5-amino-6-(ribosylamino)-2,4(1h,3h)-pyrimidinedione 5'-phosphate. This Aquifex aeolicus (strain VF5) protein is Riboflavin biosynthesis protein RibD (ribD).